The following is a 348-amino-acid chain: Rhodopsin (348 aa).

Methionine 1 carries the post-translational modification N-acetylmethionine. The Extracellular segment spans residues 1-36 (MNGTEGPNFYVPFSNATGVVRSPFEYPQYYLAEPWQ). Residues asparagine 2 and asparagine 15 are each glycosylated (N-linked (GlcNAc...) asparagine). The helical transmembrane segment at 37–61 (FSMLAAYMFLLIVLGFPINFLTLYV) threads the bilayer. At 62–73 (TVQHKKLRTPLN) the chain is on the cytoplasmic side. Residues 74–96 (YILLNLAVADLFMVFGGFTTTLY) form a helical membrane-spanning segment. Topologically, residues 97 to 110 (TSLHGYFVFGPTGC) are extracellular. Cysteine 110 and cysteine 187 are oxidised to a cystine. A helical transmembrane segment spans residues 111 to 133 (NAEGFFATLGGEIALWSLVVLAI). Positions 134–136 (ERY) match the 'Ionic lock' involved in activated form stabilization motif. Topologically, residues 134–152 (ERYVVVCKPMSNFRFGENH) are cytoplasmic. A helical transmembrane segment spans residues 153-173 (AIMGVAFTWVMALACAAPPLF). Over 174–202 (GWSRYIPEGLQCSCGIDYYTLKPEVNNES) the chain is Extracellular. Glutamate 201 lines the Zn(2+) pocket. Residues 203–224 (FVIYMFVVHFTIPMIVIFFCYG) form a helical membrane-spanning segment. The Cytoplasmic portion of the chain corresponds to 225–252 (QLVFTVKEARAQQQESATTQKAEKEVTR). A helical transmembrane segment spans residues 253–274 (MVIIMVIAFLICWVPYASVAFY). The Extracellular portion of the chain corresponds to 275-286 (IFTHQGSNFGPI). Residue glutamine 279 participates in Zn(2+) binding. Residues 287–308 (FMTIPAFFAKSASIYNPVIYIM) form a helical membrane-spanning segment. Lysine 296 carries the N6-(retinylidene)lysine modification. Residues 309 to 348 (MNKQFRNCMLTTICCGKNPLGDDEASATVSKTETSQVAPA) are Cytoplasmic-facing. Residues cysteine 322 and cysteine 323 are each lipidated (S-palmitoyl cysteine). Residues 330-348 (DDEASATVSKTETSQVAPA) form an interaction with SAG region. Serine 334 bears the Phosphoserine mark. At threonine 336 the chain carries Phosphothreonine. Phosphoserine is present on serine 338. 2 positions are modified to phosphothreonine: threonine 340 and threonine 342. A Phosphoserine modification is found at serine 343.

It belongs to the G-protein coupled receptor 1 family. Opsin subfamily. In terms of assembly, homodimer. May form a complex composed of RHO, GRK1 and RCVRN in a Ca(2+)-dependent manner; RCVRN prevents the interaction between GRK1 and RHO. Interacts with GRK1. Interacts (phosphorylated form) with SAG. Interacts with GNAT1. Interacts with GNAT3. SAG and G-proteins compete for a common binding site. Interacts with PRCD; the interaction promotes PRCD stability. Forms a complex with ASAP1 and ARF4. Forms a complex with ASAP1, RAB11A, Rabin8/RAB3IP, ARF4 and RAB11FIP3; the complex regulates Golgi-to-cilia rhodopsin/RHO transport in photoreceptors. Phosphorylated on some or all of the serine and threonine residues present in the C-terminal region. In terms of processing, contains one covalently linked retinal chromophore. Upon light absorption, the covalently bound 11-cis-retinal is converted to all-trans-retinal. After hydrolysis of the Schiff base and release of the covalently bound all-trans-retinal, active rhodopsin is regenerated by binding of a fresh molecule of 11-cis-retinal.

The protein localises to the membrane. Its subcellular location is the cell projection. It is found in the cilium. It localises to the photoreceptor outer segment. Photoreceptor required for image-forming vision at low light intensity. Required for photoreceptor cell viability after birth. Light-induced isomerization of 11-cis to all-trans retinal triggers a conformational change that activates signaling via G-proteins. Subsequent receptor phosphorylation mediates displacement of the bound G-protein alpha subunit by the arrestin SAG and terminates signaling. The protein is Rhodopsin (RHO) of Macaca fascicularis (Crab-eating macaque).